The chain runs to 191 residues: Orotate phosphoribosyltransferase (191 aa).

116-124 is a 5-phospho-alpha-D-ribose 1-diphosphate binding site; the sequence is EDVVTTGGS. Orotate contacts are provided by Thr120 and Arg148.

It belongs to the purine/pyrimidine phosphoribosyltransferase family. PyrE subfamily. Homodimer. The cofactor is Mg(2+).

It catalyses the reaction orotidine 5'-phosphate + diphosphate = orotate + 5-phospho-alpha-D-ribose 1-diphosphate. It functions in the pathway pyrimidine metabolism; UMP biosynthesis via de novo pathway; UMP from orotate: step 1/2. Functionally, catalyzes the transfer of a ribosyl phosphate group from 5-phosphoribose 1-diphosphate to orotate, leading to the formation of orotidine monophosphate (OMP). This is Orotate phosphoribosyltransferase from Heliobacterium modesticaldum (strain ATCC 51547 / Ice1).